Consider the following 255-residue polypeptide: MSKVKTLILRTPGTNCDIETSYAFELAGSETEMVHINELLAKPSRLAEFQIMAFPGGFGYGDDLGAGRVLANEVRLKLGEKINRFHESGGLIIGICNGFQALVKTGILPGPMKDGQKITLTENNSGRFECRWTYLAVNPFSTCVFTQGIDRLYLPVAHGEGKLLGSPEVINKLNSVVYYTDKDGKRNSPYPANPAGTLMDIAGIADESGRIFALMPHPERFVRGSQHPRWPAEGLKEEGDGLKIFTNAVKWARQV.

The region spanning 6-255 (TLILRTPGTN…TNAVKWARQV (250 aa)) is the Glutamine amidotransferase type-1 domain. Cys96 functions as the Nucleophile in the catalytic mechanism. Residues His217 and Glu219 contribute to the active site.

Part of the FGAM synthase complex composed of 1 PurL, 1 PurQ and 2 PurS subunits.

Its subcellular location is the cytoplasm. It catalyses the reaction N(2)-formyl-N(1)-(5-phospho-beta-D-ribosyl)glycinamide + L-glutamine + ATP + H2O = 2-formamido-N(1)-(5-O-phospho-beta-D-ribosyl)acetamidine + L-glutamate + ADP + phosphate + H(+). It carries out the reaction L-glutamine + H2O = L-glutamate + NH4(+). It participates in purine metabolism; IMP biosynthesis via de novo pathway; 5-amino-1-(5-phospho-D-ribosyl)imidazole from N(2)-formyl-N(1)-(5-phospho-D-ribosyl)glycinamide: step 1/2. In terms of biological role, part of the phosphoribosylformylglycinamidine synthase complex involved in the purines biosynthetic pathway. Catalyzes the ATP-dependent conversion of formylglycinamide ribonucleotide (FGAR) and glutamine to yield formylglycinamidine ribonucleotide (FGAM) and glutamate. The FGAM synthase complex is composed of three subunits. PurQ produces an ammonia molecule by converting glutamine to glutamate. PurL transfers the ammonia molecule to FGAR to form FGAM in an ATP-dependent manner. PurS interacts with PurQ and PurL and is thought to assist in the transfer of the ammonia molecule from PurQ to PurL. This is Phosphoribosylformylglycinamidine synthase subunit PurQ from Dehalococcoides mccartyi (strain ATCC BAA-2266 / KCTC 15142 / 195) (Dehalococcoides ethenogenes (strain 195)).